Here is an 83-residue protein sequence, read N- to C-terminus: Small ribosomal subunit protein eS27 (83 aa).

The C4-type zinc finger occupies 37-59 (CSGCFKISTVFSHATTVVVCVGC).

Belongs to the eukaryotic ribosomal protein eS27 family. It depends on Zn(2+) as a cofactor.

The sequence is that of Small ribosomal subunit protein eS27 (rps-27) from Caenorhabditis elegans.